The following is a 1442-amino-acid chain: METKNALFKKIVKISDQLLNKISIKKLTKDKKNNLFVYFDEFVDVTIIDELHQLSKTTLMHDLQIWYINNLKEVDHKKILTFFKKISEQNANLIFLEQINDLNTKIEYNSNLNSLILKINDKLIYDHFIANKLEILNILKVWSLPYSNFEIHFENLSSLLNEKHEQAVNEIISHHIQQQKHLEQQISQQQNFYNNQKANFNYYKNPSNKTITKLIDINPLMNNAKIRAYVFLKKIDILKSGAIAYKLNVIDDSETLTIMTYLPSGEHPLKKFLDELKIDQLIEAEIDIVLDNMSKSGQVPIGKIKKICCVEDKHVKKQITPRLELNFHTKMSSLDAIISTQELIDFAVKNQLKTIGITDRNVVQAYPEIAKFSKKQDLKIIYGLETEELEDQIPLVLNVRDQNLDNATYVIFDIETTGLFPNFDEIIEFGAVIMQNNKQIGEKIQFFIKPIQQINENVTNLTNISQEMVNNAIDEKTALLKIKEIFDDHILVAHNGINFDINFINQRLLKWGLEPLKNPSIDTLMISRAINPFKSHRLGAICKKYEVDYNDESAHRADYDAIVLADVFKVMKNNLFNDFGITNLSEINTKLQTTMLKNRSFGNWINLYIKNQANVKDMYELVSISHTDMYYTRPTITTSFLANKKDKLIISNSIHESDLINALYSKNDEEIKRLIQRYDFITLPSLGSQKHLVYAKKITIENVQKAFKKLIYLALELNKIIIYSSSPYYFFKDDKKFYDVYVNTKGLEGKAHRFANEVYVPDLEYIDQKNAIDELAYLEDEKLINLIINENPVHINSWFDDSIQPLKEGLYAPKMEGVDQKTIDYVYHTAKKIYGENLPTIVEQRIKKELNSIIKHGFSVVYWISHLLVEKSMQDGYGVGSRGSVGSSLVATFLNITDVNPLTPHYLCPNCKKCEFITNADDGFDLAPKSCEQCQTPMLTDGHNIPFETFLGFDGDKVPDIDLNFSGVYQAVAHNFIKSIFGETHSYRAGTIGTMAQTSAENTVKKYFENRFNENKIIRDSTVSLYVQKCIDSKRTTGQHPGGIIIVPKEYSIWDFSPYNFPANDINETWKTTHFAFEYLHDSLLKFDILGHDNPTILKLLKDYTGIDERDVPMYDPLVMKSFSDISALNIKPSDVLNETTGAISIPEFGTRFVRGMLVDTKPKSFADLIRISGLSHGESVWLGNAQSLIKSGKLLKDVIACRDDIMTYLIRQNVEPKTAFLIMEDVRKGKKIKPEHQIILKELKVPEWYIESANKIKYMFPKAHATAYVMHAWKFAWYKIYYPLEYYAAFFSVRADNFDLFVINQGKEFIEKTYNDIEQRSKSRDPQKKVSSRELALQPIYEIVIELLARGFKISNISIEQSQATSYVIDKENNAIIPPFIAIQGLGETVANSIIEARNQKVFSTIEDLKNRTKISRTDLKNLRVLGVLDHLSETEQLTLF.

Residues 409 to 568 (YVIFDIETTG…YDAIVLADVF (160 aa)) enclose the Exonuclease domain.

Belongs to the DNA polymerase type-C family. PolC subfamily.

Its subcellular location is the cytoplasm. It catalyses the reaction DNA(n) + a 2'-deoxyribonucleoside 5'-triphosphate = DNA(n+1) + diphosphate. Required for replicative DNA synthesis. This DNA polymerase also exhibits 3' to 5' exonuclease activity. The protein is DNA polymerase III PolC-type of Ureaplasma parvum serovar 3 (strain ATCC 700970).